Consider the following 171-residue polypeptide: ATP synthase subunit b (171 aa).

A helical transmembrane segment spans residues 31–51; sequence FFVVLAIFLVVLAVIGTFVVP.

This sequence belongs to the ATPase B chain family. As to quaternary structure, F-type ATPases have 2 components, F(1) - the catalytic core - and F(0) - the membrane proton channel. F(1) has five subunits: alpha(3), beta(3), gamma(1), delta(1), epsilon(1). F(0) has three main subunits: a(1), b(2) and c(10-14). The alpha and beta chains form an alternating ring which encloses part of the gamma chain. F(1) is attached to F(0) by a central stalk formed by the gamma and epsilon chains, while a peripheral stalk is formed by the delta and b chains.

It localises to the cell membrane. F(1)F(0) ATP synthase produces ATP from ADP in the presence of a proton or sodium gradient. F-type ATPases consist of two structural domains, F(1) containing the extramembraneous catalytic core and F(0) containing the membrane proton channel, linked together by a central stalk and a peripheral stalk. During catalysis, ATP synthesis in the catalytic domain of F(1) is coupled via a rotary mechanism of the central stalk subunits to proton translocation. Functionally, component of the F(0) channel, it forms part of the peripheral stalk, linking F(1) to F(0). This Mycobacterium bovis (strain ATCC BAA-935 / AF2122/97) protein is ATP synthase subunit b.